Here is a 501-residue protein sequence, read N- to C-terminus: Aldehyde dehydrogenase, cytosolic 1 (501 aa).

246–251 (GSTEVG) lines the NAD(+) pocket. The active-site Proton acceptor is the Glu-269. Cys-303 (nucleophile) is an active-site residue.

It belongs to the aldehyde dehydrogenase family. In terms of assembly, homotetramer. Eye specific, with very high expression in the lens.

It localises to the cytoplasm. The enzyme catalyses an aldehyde + NAD(+) + H2O = a carboxylate + NADH + 2 H(+). Its pathway is alcohol metabolism; ethanol degradation; acetate from ethanol: step 2/2. Its function is as follows. Major component of the eye of elephant shrews, which in contrast to other mammals, possesses both a lens- and a non-lens class-1 aldehyde dehydrogenase 1. This eye-specific form is a structural protein of the lens and, in other part of the eye, serves as the major form of ALDH1. Can convert/oxidize retinaldehyde to retinoic acid. The protein is Aldehyde dehydrogenase, cytosolic 1 (ALDH1) of Macroscelides proboscideus (Short-eared elephant shrew).